The primary structure comprises 664 residues: Prelamin-A/C (664 aa).

An N-acetylmethionine modification is found at M1. A disordered region spans residues 1 to 24 (METPSQRRATRSGAQASSTPLSPT). The interval 1–33 (METPSQRRATRSGAQASSTPLSPTRITRLQEKE) is head. Residues 1-130 (METPSQRRAT…TKKEGDLMAA (130 aa)) are interaction with MLIP. T3 carries the phosphothreonine modification. S5 bears the Phosphoserine mark. T10 is subject to Phosphothreonine. A phosphoserine mark is found at S12 and S18. At T19 the chain carries Phosphothreonine. The residue at position 22 (S22) is a Phosphoserine. Residues 31 to 387 (EKEDLQELND…KLLEGEEERL (357 aa)) enclose the IF rod domain. K32 carries the post-translational modification N6-acetyllysine; alternate. Position 32 is an N6-succinyllysine; alternate (K32). K32 participates in a covalent cross-link: Glycyl lysine isopeptide (Lys-Gly) (interchain with G-Cter in SUMO2); alternate. The segment at 34-70 (DLQELNDRLAVYIDRVRSLETENAGLRLRITESEEVV) is coil 1A. A phosphoserine mark is found at S51, S66, and S71. A linker 1 region spans residues 71–80 (SREVSGIKSA). N6-acetyllysine is present on residues K78 and K97. Residues 81-218 (YEAELGDARK…NIYSEELRET (138 aa)) form a coil 1B region. A Glycyl lysine isopeptide (Lys-Gly) (interchain with G-Cter in SUMO2) cross-link involves residue K97. The residue at position 107 (S107) is a Phosphoserine. N6-acetyllysine is present on residues K108, K114, K123, K135, K144, and K155. K171 bears the N6-acetyllysine; alternate mark. Position 171 is an N6-succinyllysine; alternate (K171). K171 participates in a covalent cross-link: Glycyl lysine isopeptide (Lys-Gly) (interchain with G-Cter in SUMO2); alternate. N6-acetyllysine occurs at positions 180, 201, and 208. A Glycyl lysine isopeptide (Lys-Gly) (interchain with G-Cter in SUMO2); alternate cross-link involves residue K201. K201 participates in a covalent cross-link: Glycyl lysine isopeptide (Lys-Gly) (interchain with G-Cter in SUMO); alternate. A Glycyl lysine isopeptide (Lys-Gly) (interchain with G-Cter in SUMO2) cross-link involves residue K208. S212 carries the post-translational modification Phosphoserine. Glycyl lysine isopeptide (Lys-Gly) (interchain with G-Cter in SUMO2) cross-links involve residues K219 and K233. Positions 219-242 (KRRHETRLVEIDNGKQREFESRLA) are linker 2. 4 positions are modified to N6-acetyllysine: K233, K260, K265, and K270. Residues 243–383 (DALQDLRAQH…HAYRKLLEGE (141 aa)) form a coil 2 region. A Glycyl lysine isopeptide (Lys-Gly) (interchain with G-Cter in SUMO2); alternate cross-link involves residue K260. A Glycyl lysine isopeptide (Lys-Gly) (interchain with G-Cter in SUMO2); alternate cross-link involves residue K270. Phosphoserine is present on residues S277, S282, S301, and S307. A Glycyl lysine isopeptide (Lys-Gly) (interchain with G-Cter in SUMO2); alternate cross-link involves residue K311. An N6-acetyllysine mark is found at K311, K316, and K341. Residues K366 and K378 each participate in a glycyl lysine isopeptide (Lys-Gly) (interchain with G-Cter in SUMO2) cross-link. The segment at 384-442 (EERLRLSPSPTSQRSRGRASSHSSQTQSGGSVTKKRKLESSESRSSFSQHARTSGRVAV) is disordered. Residues 384 to 664 (EERLRLSPSP…TQSPQNCSIM (281 aa)) form a tail region. 9 positions are modified to phosphoserine: S390, S392, S395, S398, S403, S404, S406, S407, and S414. The segment covering 403–414 (SSHSSQTQSGGS) has biased composition (low complexity). The residue at position 416 (T416) is a Phosphothreonine. K417 carries the N6-acetyllysine modification. Residues K417 and K420 each participate in a glycyl lysine isopeptide (Lys-Gly) (interchain with G-Cter in SUMO2) cross-link. The short motif at 417 to 422 (KKRKLE) is the Nuclear localization signal element. 4 positions are modified to phosphoserine: S423, S426, S429, and S431. The LTD domain maps to 428-545 (SSFSQHARTS…EEVAMRKLVR (118 aa)). K450 is covalently cross-linked (Glycyl lysine isopeptide (Lys-Gly) (interchain with G-Cter in SUMO2); alternate). An N6-acetyllysine mark is found at K450 and K457. Phosphoserine is present on residues S458 and S463. Residues K470 and K486 each participate in a glycyl lysine isopeptide (Lys-Gly) (interchain with G-Cter in SUMO2) cross-link. Residue K486 is modified to N6-acetyllysine. 2 positions are modified to phosphothreonine: T496 and T505. 2 positions are modified to phosphoserine: S533 and S546. The residue at position 548 (T548) is a Phosphothreonine. Residues 555 to 577 (DEDGDDLLHHHHGSHGSSSGDPA) form a disordered region. S568 and S571 each carry phosphoserine. K597 participates in a covalent cross-link: Glycyl lysine isopeptide (Lys-Gly) (interchain with G-Cter in SUMO2); alternate. A Glycyl lysine isopeptide (Lys-Gly) (interchain with G-Cter in SUMO1); alternate cross-link involves residue K597. Residues 598 to 620 (ASASSSGAQVGGSISSGSSASSV) are disordered. A phosphoserine mark is found at S612, S613, S616, and S619. Residues S625 and S628 are each glycosylated (O-linked (GlcNAc) serine). Phosphoserine occurs at positions 628, 632, and 636. The propeptide at 647 to 661 (LLGNSRPRTQSPQNC) is removed in Lamin-A/C form. Residue C661 is modified to Cysteine methyl ester. C661 carries S-farnesyl cysteine lipidation. Positions 662–664 (SIM) are cleaved as a propeptide — removed in Prelamin-A/C form and in Lamin-A/C form.

This sequence belongs to the intermediate filament family. In terms of assembly, homodimer of lamin A and lamin C. Lamin dimers then assemble into dimeric head-to-tail polymers. Ultimately, two head-to-tail polymers assemble laterally into a protofilament with a uniformly shaped rod of 3.5 nm in diameter. Interacts with lamin-associated polypeptides IA, IB and TMPO-alpha, RB1 and with emerin. Interacts with SREBF1, SREBF2, SUN2 and TMEM43. Interacts with TMEM201. Proteolytically processed isoform A interacts with NARF. Interacts with SUN1. Interacts with MLIP. Interacts with DMPK; may regulate nuclear envelope stability. Interacts with SUV39H1; the interaction increases stability of SUV39H1. Interacts with SYNE2. Interacts with ITSN1 isoform 2. Interacts with IFFO1; enables the formation of an interior nucleoskeleton that is recruited to DNA double-strand breaks. Interacts with EMD. As to quaternary structure, interacts (via C-terminus) with LEMD2 (via N-terminus) (in vitro). Post-translationally, proteolytic cleavage of the C-terminal of 18 residues of prelamin-A/C results in the production of lamin-A/C. The prelamin-A/C maturation pathway includes farnesylation of CAAX motif by protein farnesyltransferase (FNTA and FNTB), removal of the last three amino acids (-AAX) by RCE1/FACE2 and/or ZMPSTE24, methylation of the C-terminal cysteine by ICMT and endoproteolytic removal of the last 15 C-terminal amino acids by ZMPSTE24. Proteolytic cleavage requires prior farnesylation and methylation, and absence of these blocks cleavage. In terms of processing, farnesylation of prelamin-A/C facilitates nuclear envelope targeting. Phosphorylation plays a key role in lamin organization, subcellular localization and nuclear envelope disintegration. Phosphorylation by CDK1 at Ser-22 and Ser-392 at the onset of mitosis drives lamin disassembly and nuclear envelope breakdown. Phosphorylation at Ser-22 and Ser-392 during interphase promotes localization to the nucleoplasm and regulates lamina assembly. Phosphorylation at Ser-22, Ser-392 and Ser-628 during interphase causes redistribution between the nucleus and the cytoplasm. Phosphorylation at Ser-22 by CDK1 regulates matrix stiffness. Phosphorylation status of Ser-22 determines its localization between double-strand break (DSB) sites and the nuclear matrix. Phosphorylated by ATR at Ser-282 in response to DNA damage, leading to lamin disassembly and nuclear envelope rupture. Phosphorylation also regulates stability in micronuclei arising from genome instability: phosphorylation at Ser-395 by ATR in response to genome instability and double-stranded DNA breaks primes LMNA for subsequent phosphorylation at Ser-392 by CDK1 and micronuclei envelope rupture. The rupture of micronuclear envelope triggers the cGAS-STING pathway thereby activating the type I interferon response and innate immunity. Post-translationally, acetylation by KAT8 is required for nuclear architecture. In terms of processing, sumoylation is necessary for the localization to the nuclear envelope.

It localises to the nucleus lamina. The protein localises to the nucleus envelope. It is found in the nucleus. The protein resides in the nucleoplasm. Its subcellular location is the nucleus matrix. Functionally, lamins are intermediate filament proteins that assemble into a filamentous meshwork, and which constitute the major components of the nuclear lamina, a fibrous layer on the nucleoplasmic side of the inner nuclear membrane. Lamins provide a framework for the nuclear envelope, bridging the nuclear envelope and chromatin, thereby playing an important role in nuclear assembly, chromatin organization, nuclear membrane and telomere dynamics. Lamin A and C also regulate matrix stiffness by conferring nuclear mechanical properties. The structural integrity of the lamina is strictly controlled by the cell cycle, as seen by the disintegration and formation of the nuclear envelope in prophase and telophase, respectively. Lamin A and C are present in equal amounts in the lamina of mammals. Also invoved in DNA repair: recruited by DNA repair proteins XRCC4 and IFFO1 to the DNA double-strand breaks (DSBs) to prevent chromosome translocation by immobilizing broken DNA ends. Required for normal development of peripheral nervous system and skeletal muscle and for muscle satellite cell proliferation. Required for osteoblastogenesis and bone formation. Also prevents fat infiltration of muscle and bone marrow, helping to maintain the volume and strength of skeletal muscle and bone. Required for cardiac homeostasis. In terms of biological role, prelamin-A/C can accelerate smooth muscle cell senescence. It acts to disrupt mitosis and induce DNA damage in vascular smooth muscle cells (VSMCs), leading to mitotic failure, genomic instability, and premature senescence. In Sus scrofa (Pig), this protein is Prelamin-A/C (LMNA).